The chain runs to 155 residues: DNA gyrase inhibitor (155 aa).

Belongs to the DNA gyrase inhibitor family. In terms of assembly, interacts with DNA gyrase.

It is found in the cytoplasm. In terms of biological role, inhibits the supercoiling activity of DNA gyrase. Acts by inhibiting DNA gyrase at an early step, prior to (or at the step of) binding of DNA by the gyrase. It protects cells against toxins that target DNA gyrase, by inhibiting activity of these toxins and reducing the formation of lethal double-strand breaks in the cell. In Edwardsiella ictaluri (strain 93-146), this protein is DNA gyrase inhibitor.